Consider the following 226-residue polypeptide: ATP synthase subunit C lysine N-methyltransferase (226 aa).

The chain crosses the membrane as a helical span at residues 35–55; the sequence is VIGGTLVALYAVATPFVAPAL. The segment at 48–82 is required for mitochondrial location; sequence TPFVAPALRKLCLPYVPATTTQVKNVLKMLRSRTG.

This sequence belongs to the ANT/ATPSC lysine N-methyltransferase family.

It is found in the mitochondrion membrane. Functionally, mitochondrial protein-lysine N-methyltransferase that promotes chronic pain. Involved in persistent inflammatory and neuropathic pain: methyltransferase activity in the mitochondria of sensory neurons promotes chronic pain via a pathway that depends on the production of reactive oxygen species (ROS) and on the engagement of spinal cord microglia. Protein-lysine N-methyltransferase activity is dependent on S-adenosyl-L-methionine. This chain is ATP synthase subunit C lysine N-methyltransferase (atpsckmt), found in Xenopus laevis (African clawed frog).